Consider the following 609-residue polypeptide: MTIKFLSENTINRIAAGEVIERPASVVKELVENAVDAGSTKIDIILERAGKNLIIISDDGIGMTDKELEIAVERHTTSKLDESDFLNIHTFGFRGEALPSIAAISKMLITSKKQGYDKAFQIKLIGGNEKQVTISVHNEGTKIEIRDLFFATPARLKFLRSDKTELVATVDVVKKIALAHPKISFSLTHDDRNLLKFKGHNKDVETNLKQRIIDVIGDDFIKNAAYIDFKTPDFSICGYTSIPTYNRASSEDQFLFINNRPVKDKLLQVALRVAYQDYLARDRYPLCAIFLQIDPQLVDVNVHPAKAEVRFHDPNYVRNLLIEAIKNALTNTSHVTSTTIASDALQLFKNHLVNKQPSVSKAVSVNSKPTDYRPAMSPSFKSTPNTDCQKLIDTLPHAKIEQEVERRIEREQQAHKQYKLGAAKAQLHTTYIISQTEDSIVITDQHAAHERLGYEKIKDYLKTEELIRQRLLIPEIVELPNERNADSLYENREKLYKLGLTLEKFGEKSIIVTEIPNILGDVNVQKLIHDLADHLSDFGENIALTELIEHVTETYACHYSIRAGRKLSADEMNALLRQMENTPFSGQCNHGRPTYIELKLKDIERLFGR.

A disordered region spans residues 364–386 (SVNSKPTDYRPAMSPSFKSTPNT).

This sequence belongs to the DNA mismatch repair MutL/HexB family.

Functionally, this protein is involved in the repair of mismatches in DNA. It is required for dam-dependent methyl-directed DNA mismatch repair. May act as a 'molecular matchmaker', a protein that promotes the formation of a stable complex between two or more DNA-binding proteins in an ATP-dependent manner without itself being part of a final effector complex. The protein is DNA mismatch repair protein MutL of Rickettsia akari (strain Hartford).